The primary structure comprises 444 residues: Probable kynurenine--oxoglutarate transaminase BNA3 (444 aa).

Residue Lys-271 is modified to N6-(pyridoxal phosphate)lysine.

The protein belongs to the class-I pyridoxal-phosphate-dependent aminotransferase family. Homodimer. It depends on pyridoxal 5'-phosphate as a cofactor.

It localises to the cytoplasm. It is found in the mitochondrion. The enzyme catalyses L-kynurenine + 2-oxoglutarate = kynurenate + L-glutamate + H2O. Its pathway is amino-acid degradation; L-kynurenine degradation; kynurenate from L-kynurenine: step 1/2. In terms of biological role, catalyzes the irreversible transamination of the L-tryptophan metabolite L-kynurenine to form kynurenic acid (KA). The chain is Probable kynurenine--oxoglutarate transaminase BNA3 (BNA3) from Saccharomyces cerevisiae (strain ATCC 204508 / S288c) (Baker's yeast).